A 380-amino-acid polypeptide reads, in one-letter code: Cytochrome b (380 aa).

4 helical membrane-spanning segments follow: residues 33–53 (FGSL…FLAM), 77–98 (WLIR…FIHV), 113–133 (WNIG…GYVL), and 178–198 (FFAF…VHLL). Residues His83 and His97 each contribute to the heme b site. Residues His182 and His196 each contribute to the heme b site. Residue His201 coordinates a ubiquinone. Transmembrane regions (helical) follow at residues 226–246 (IKDL…VLFF), 288–308 (LGGV…PFLN), 320–340 (ITQF…WIGG), and 347–367 (FTTI…VLMP).

Belongs to the cytochrome b family. As to quaternary structure, the cytochrome bc1 complex contains 11 subunits: 3 respiratory subunits (MT-CYB, CYC1 and UQCRFS1), 2 core proteins (UQCRC1 and UQCRC2) and 6 low-molecular weight proteins (UQCRH/QCR6, UQCRB/QCR7, UQCRQ/QCR8, UQCR10/QCR9, UQCR11/QCR10 and a cleavage product of UQCRFS1). This cytochrome bc1 complex then forms a dimer. Heme b serves as cofactor.

It is found in the mitochondrion inner membrane. Its function is as follows. Component of the ubiquinol-cytochrome c reductase complex (complex III or cytochrome b-c1 complex) that is part of the mitochondrial respiratory chain. The b-c1 complex mediates electron transfer from ubiquinol to cytochrome c. Contributes to the generation of a proton gradient across the mitochondrial membrane that is then used for ATP synthesis. The chain is Cytochrome b (MT-CYB) from Thomasomys ischyrus (Strong-tailed oldfield mouse).